A 245-amino-acid polypeptide reads, in one-letter code: tRNA (guanine-N(7)-)-methyltransferase (245 aa).

E75, E100, D127, and D150 together coordinate S-adenosyl-L-methionine. The active site involves D150. Substrate-binding positions include K154, D186, and 223-226 (TKFE).

This sequence belongs to the class I-like SAM-binding methyltransferase superfamily. TrmB family.

The enzyme catalyses guanosine(46) in tRNA + S-adenosyl-L-methionine = N(7)-methylguanosine(46) in tRNA + S-adenosyl-L-homocysteine. It participates in tRNA modification; N(7)-methylguanine-tRNA biosynthesis. Catalyzes the formation of N(7)-methylguanine at position 46 (m7G46) in tRNA. This Photobacterium profundum (strain SS9) protein is tRNA (guanine-N(7)-)-methyltransferase.